The following is a 102-amino-acid chain: Glutaredoxin (102 aa).

The region spanning Met3–Val102 is the Glutaredoxin domain. A disulfide bond links Cys23 and Cys26.

The protein belongs to the glutaredoxin family. CPYC subfamily.

The protein resides in the cytoplasm. Functionally, has a glutathione-disulfide oxidoreductase activity in the presence of NADPH and glutathione reductase. Reduces low molecular weight disulfides and proteins. This chain is Glutaredoxin, found in Ricinus communis (Castor bean).